A 306-amino-acid polypeptide reads, in one-letter code: Ornithine carbamoyltransferase (306 aa).

Residues 50 to 53, Q77, R101, and 128 to 131 each bind carbamoyl phosphate; these read STRT and HPCQ. L-ornithine contacts are provided by residues N160, D224, and 228-229; that span reads SM. Residues 264-265 and R292 each bind carbamoyl phosphate; that span reads CL.

The protein belongs to the aspartate/ornithine carbamoyltransferase superfamily. OTCase family.

Its subcellular location is the cytoplasm. The catalysed reaction is carbamoyl phosphate + L-ornithine = L-citrulline + phosphate + H(+). It functions in the pathway amino-acid biosynthesis; L-arginine biosynthesis; L-arginine from L-ornithine and carbamoyl phosphate: step 1/3. Functionally, reversibly catalyzes the transfer of the carbamoyl group from carbamoyl phosphate (CP) to the N(epsilon) atom of ornithine (ORN) to produce L-citrulline. This chain is Ornithine carbamoyltransferase, found in Mycobacterium leprae (strain TN).